A 207-amino-acid chain; its full sequence is Probable glutathione S-transferase 5 (207 aa).

The 80-residue stretch at valine 2–glycine 81 folds into the GST N-terminal domain. Glutathione-binding positions include tyrosine 8, tryptophan 39, lysine 43, glycine 51–leucine 53, and glutamine 65–serine 66. Residues threonine 83–phenylalanine 207 form the GST C-terminal domain.

This sequence belongs to the GST superfamily. Sigma family.

The enzyme catalyses RX + glutathione = an S-substituted glutathione + a halide anion + H(+). Functionally, conjugation of reduced glutathione to a wide number of exogenous and endogenous hydrophobic electrophiles. May play a role in the detoxification of reactive oxygen species produced during pathogenic bacterial infection. This Caenorhabditis elegans protein is Probable glutathione S-transferase 5 (gst-5).